Here is a 179-residue protein sequence, read N- to C-terminus: Segregation and condensation protein B (179 aa).

It belongs to the ScpB family. In terms of assembly, homodimer. Homodimerization may be required to stabilize the binding of ScpA to the Smc head domains. Component of a cohesin-like complex composed of ScpA, ScpB and the Smc homodimer, in which ScpA and ScpB bind to the head domain of Smc. The presence of the three proteins is required for the association of the complex with DNA.

Its subcellular location is the cytoplasm. In terms of biological role, participates in chromosomal partition during cell division. May act via the formation of a condensin-like complex containing Smc and ScpA that pull DNA away from mid-cell into both cell halves. This is Segregation and condensation protein B from Streptococcus equi subsp. equi (strain 4047).